The primary structure comprises 328 residues: uncharacterized protein (328 aa).

A signal peptide spans 1 to 24 (MKSIKGLGKLLLASSILFSSSAFA).

The protein belongs to the bacterial solute-binding protein 7 family.

The protein localises to the periplasm. This is an uncharacterized protein from Haemophilus influenzae (strain ATCC 51907 / DSM 11121 / KW20 / Rd).